We begin with the raw amino-acid sequence, 162 residues long: UPF0460 protein y4vQ (162 aa).

The protein belongs to the UPF0460 family.

The chain is UPF0460 protein y4vQ from Sinorhizobium fredii (strain NBRC 101917 / NGR234).